The primary structure comprises 208 residues: N-(5'-phosphoribosyl)anthranilate isomerase (208 aa).

It belongs to the TrpF family.

It catalyses the reaction N-(5-phospho-beta-D-ribosyl)anthranilate = 1-(2-carboxyphenylamino)-1-deoxy-D-ribulose 5-phosphate. The protein operates within amino-acid biosynthesis; L-tryptophan biosynthesis; L-tryptophan from chorismate: step 3/5. This is N-(5'-phosphoribosyl)anthranilate isomerase from Staphylococcus haemolyticus (strain JCSC1435).